The following is a 453-amino-acid chain: TATA box-binding protein-associated factor RNA polymerase I subunit A (453 aa).

Component of the transcription factor SL1/TIF-IB complex, composed of TBP and at least TAF1A, TAF1B, TAF1C and TAF1D. In the complex interacts directly with TBP, TAF1A and TAF1B. Interaction of the SL1/TIF-IB subunits with TBP excludes interaction of TBP with the transcription factor IID (TFIID) subunits. Interacts with UBFT. Interacts with CEBPA (isoform 1 and isoform 4). Part of Pol I pre-initiation complex (PIC), in which Pol I core assembles with RRN3 and promoter-bound UTBF and SL1/TIF-IB complex.

It localises to the nucleus. It is found in the nucleolus. Component of the transcription factor SL1/TIF-IB complex, which is involved in the assembly of the PIC (pre-initiation complex) during RNA polymerase I-dependent transcription. The rate of PIC formation probably is primarily dependent on the rate of association of SL1/TIF-IB with the rDNA promoter. SL1/TIF-IB is involved in stabilization of nucleolar transcription factor 1/UBTF on rDNA. Formation of SL1/TIF-IB excludes the association of TBP with TFIID subunits. The polypeptide is TATA box-binding protein-associated factor RNA polymerase I subunit A (Taf1a) (Mus musculus (Mouse)).